A 778-amino-acid polypeptide reads, in one-letter code: Ent-sandaracopimaradiene synthase KSL3, chloroplastic (778 aa).

Residues 1–35 (MLLTSTNTLKISSQRKEWEAKDLTGMFHGQVNGRV) constitute a chloroplast transit peptide. Mg(2+)-binding residues include D527, E531, N670, D671, and D678. A DDXXD motif motif is present at residues 527 to 531 (DDFFE).

Belongs to the terpene synthase family. Requires Mg(2+) as cofactor.

The protein localises to the plastid. It is found in the chloroplast. The enzyme catalyses ent-copalyl diphosphate = ent-sandaracopimara-8(14),15-diene + diphosphate. The catalysed reaction is ent-copalyl diphosphate = ent-(12E)-labda-8(17),12,14-triene + diphosphate. It functions in the pathway secondary metabolite biosynthesis; terpenoid biosynthesis. Diterpene cyclase involved in the biosynthesis of labdane-related diterpenoids (LRDs) natural products. Catalyzes the cyclization of ent-CDP into ent-sandaracopimaradiene as a major, and ent-pimaradiene and ent-labdatriene as minor products. The chain is Ent-sandaracopimaradiene synthase KSL3, chloroplastic from Ricinus communis (Castor bean).